A 455-amino-acid polypeptide reads, in one-letter code: tRNA-2-methylthio-N(6)-dimethylallyladenosine synthase (455 aa).

In terms of domain architecture, MTTase N-terminal spans 10–130 (RKVFIKTYGC…LPDALKRVRR (121 aa)). Residues C19, C55, C93, C171, C175, and C178 each coordinate [4Fe-4S] cluster. A Radical SAM core domain is found at 157 to 389 (RSRGVTAFLT…QALLLRQQKE (233 aa)). In terms of domain architecture, TRAM spans 392-454 (ESLVGKTMDV…PNSLFAEVAG (63 aa)).

This sequence belongs to the methylthiotransferase family. MiaB subfamily. Monomer. Requires [4Fe-4S] cluster as cofactor.

The protein localises to the cytoplasm. It carries out the reaction N(6)-dimethylallyladenosine(37) in tRNA + (sulfur carrier)-SH + AH2 + 2 S-adenosyl-L-methionine = 2-methylsulfanyl-N(6)-dimethylallyladenosine(37) in tRNA + (sulfur carrier)-H + 5'-deoxyadenosine + L-methionine + A + S-adenosyl-L-homocysteine + 2 H(+). Its function is as follows. Catalyzes the methylthiolation of N6-(dimethylallyl)adenosine (i(6)A), leading to the formation of 2-methylthio-N6-(dimethylallyl)adenosine (ms(2)i(6)A) at position 37 in tRNAs that read codons beginning with uridine. The chain is tRNA-2-methylthio-N(6)-dimethylallyladenosine synthase from Agrobacterium fabrum (strain C58 / ATCC 33970) (Agrobacterium tumefaciens (strain C58)).